The sequence spans 403 residues: Palmitoyltransferase ZDHHC23-A (403 aa).

The Cytoplasmic portion of the chain corresponds to M1–T70. A helical membrane pass occupies residues V71–L91. Position 92 (R92) is a topological domain, lumenal. The helical transmembrane segment at V93–L113 threads the bilayer. At W114–R125 the chain is on the cytoplasmic side. A helical membrane pass occupies residues T126–T146. Topologically, residues E147–D153 are lumenal. Residues V154–V174 traverse the membrane as a helical segment. Residues R175 to R268 are Cytoplasmic-facing. The region spanning K225–L275 is the DHHC domain. C255 acts as the S-palmitoyl cysteine intermediate in catalysis. Residues Q269–L289 traverse the membrane as a helical segment. Residues R290–T319 lie on the Lumenal side of the membrane. Residues C320–I340 traverse the membrane as a helical segment. Topologically, residues N341–V403 are cytoplasmic.

It belongs to the DHHC palmitoyltransferase family.

The protein localises to the golgi apparatus membrane. The protein resides in the golgi apparatus. It is found in the trans-Golgi network membrane. It catalyses the reaction L-cysteinyl-[protein] + hexadecanoyl-CoA = S-hexadecanoyl-L-cysteinyl-[protein] + CoA. Functionally, palmitoyltransferase that could catalyze the addition of palmitate onto various protein substrates and be involved in a variety of cellular processes. This chain is Palmitoyltransferase ZDHHC23-A (zdhhc23a), found in Danio rerio (Zebrafish).